Here is a 342-residue protein sequence, read N- to C-terminus: Anthranilate phosphoribosyltransferase (342 aa).

Residues G83, 86 to 87, T91, 93 to 96, 111 to 119, and S123 contribute to the 5-phospho-alpha-D-ribose 1-diphosphate site; these read GD, NIST, and KHGNRGVSS. G83 provides a ligand contact to anthranilate. S95 provides a ligand contact to Mg(2+). N114 contributes to the anthranilate binding site. Anthranilate is bound at residue R169. Positions 228 and 229 each coordinate Mg(2+).

This sequence belongs to the anthranilate phosphoribosyltransferase family. As to quaternary structure, homodimer. It depends on Mg(2+) as a cofactor.

The enzyme catalyses N-(5-phospho-beta-D-ribosyl)anthranilate + diphosphate = 5-phospho-alpha-D-ribose 1-diphosphate + anthranilate. It functions in the pathway amino-acid biosynthesis; L-tryptophan biosynthesis; L-tryptophan from chorismate: step 2/5. Its function is as follows. Catalyzes the transfer of the phosphoribosyl group of 5-phosphorylribose-1-pyrophosphate (PRPP) to anthranilate to yield N-(5'-phosphoribosyl)-anthranilate (PRA). In Paraburkholderia phymatum (strain DSM 17167 / CIP 108236 / LMG 21445 / STM815) (Burkholderia phymatum), this protein is Anthranilate phosphoribosyltransferase.